Reading from the N-terminus, the 556-residue chain is Peptide chain release factor 3 (556 aa).

Residues 28-297 (QQRRNFAIIS…AFLDYALKPG (270 aa)) enclose the tr-type G domain. GTP is bound by residues 37–44 (SHPDAGKT), 105–109 (DTPGH), and 159–162 (NKMD).

It belongs to the TRAFAC class translation factor GTPase superfamily. Classic translation factor GTPase family. PrfC subfamily.

It localises to the cytoplasm. In terms of biological role, increases the formation of ribosomal termination complexes and stimulates activities of RF-1 and RF-2. It binds guanine nucleotides and has strong preference for UGA stop codons. It may interact directly with the ribosome. The stimulation of RF-1 and RF-2 is significantly reduced by GTP and GDP, but not by GMP. This chain is Peptide chain release factor 3, found in Synechococcus sp. (strain ATCC 27144 / PCC 6301 / SAUG 1402/1) (Anacystis nidulans).